Reading from the N-terminus, the 132-residue chain is Small ribosomal subunit protein eS24 (132 aa).

The tract at residues 91–132 (LATHGLYEKKKTSRKQRTERQNRMKKVRSIKKASVGAAGKKN) is disordered. The span at 96-112 (LYEKKKTSRKQRTERQN) shows a compositional bias: basic and acidic residues.

Belongs to the eukaryotic ribosomal protein eS24 family. As to quaternary structure, component of the small ribosomal subunit.

The protein localises to the cytoplasm. Its function is as follows. Component of the small ribosomal subunit. The ribosome is a large ribonucleoprotein complex responsible for the synthesis of proteins in the cell. Required for processing of pre-rRNA and maturation of 40S ribosomal subunits. The sequence is that of Small ribosomal subunit protein eS24 (rps24) from Oryzias latipes (Japanese rice fish).